We begin with the raw amino-acid sequence, 457 residues long: Acetylcholine receptor subunit alpha-1-A (457 aa).

Positions 1-20 (MDFVLTRLILLFLAATIIYS) are cleaved as a signal peptide. Topologically, residues 21–230 (SEDESRLIND…ITYHFLLQRL (210 aa)) are extracellular. Cystine bridges form between C148-C162 and C212-C213. N161 carries N-linked (GlcNAc...) asparagine glycosylation. 3 helical membrane passes run 231–255 (PLYF…VFYL), 263–281 (ITLS…LVIV), and 297–316 (YMLF…VIVI). Topologically, residues 317 to 428 (NTHHRSPSTH…WKFVAMVLDH (112 aa)) are cytoplasmic. A helical transmembrane segment spans residues 429-447 (LLLAVFMIVCIIGTLAIFA).

This sequence belongs to the ligand-gated ion channel (TC 1.A.9) family. Acetylcholine receptor (TC 1.A.9.1) subfamily. Alpha-1/CHRNA1 sub-subfamily. One of the alpha chains that assemble within the acetylcholine receptor, a pentamer of two alpha chains, a beta, a delta, and a gamma or epsilon chains. In terms of tissue distribution, oocytes.

It is found in the postsynaptic cell membrane. The protein resides in the cell membrane. The catalysed reaction is K(+)(in) = K(+)(out). It carries out the reaction Na(+)(in) = Na(+)(out). Functionally, upon acetylcholine binding, the AChR responds by an extensive change in conformation that affects all subunits and leads to opening of an ion-conducting channel across the plasma membrane. This chain is Acetylcholine receptor subunit alpha-1-A (chrna1-a), found in Xenopus laevis (African clawed frog).